Consider the following 124-residue polypeptide: Fluoride-specific ion channel FluC 2 (124 aa).

4 helical membrane-spanning segments follow: residues 9–29 (LGIF…STWL), 34–54 (DFPW…IFLV), 67–87 (LILA…SLML), and 99–119 (FSLV…AYFL). Na(+)-binding residues include Gly77 and Thr80.

It belongs to the fluoride channel Fluc/FEX (TC 1.A.43) family.

It is found in the cell membrane. The enzyme catalyses fluoride(in) = fluoride(out). Na(+) is not transported, but it plays an essential structural role and its presence is essential for fluoride channel function. Fluoride-specific ion channel. Important for reducing fluoride concentration in the cell, thus reducing its toxicity. The polypeptide is Fluoride-specific ion channel FluC 2 (Streptococcus pneumoniae (strain ATCC BAA-255 / R6)).